Here is a 1070-residue protein sequence, read N- to C-terminus: DNA-directed RNA polymerase subunit beta (1070 aa).

The protein belongs to the RNA polymerase beta chain family. In plastids the minimal PEP RNA polymerase catalytic core is composed of four subunits: alpha, beta, beta', and beta''. When a (nuclear-encoded) sigma factor is associated with the core the holoenzyme is formed, which can initiate transcription.

The protein resides in the plastid. It is found in the chloroplast. The enzyme catalyses RNA(n) + a ribonucleoside 5'-triphosphate = RNA(n+1) + diphosphate. In terms of biological role, DNA-dependent RNA polymerase catalyzes the transcription of DNA into RNA using the four ribonucleoside triphosphates as substrates. This chain is DNA-directed RNA polymerase subunit beta, found in Platanus occidentalis (Sycamore).